The sequence spans 183 residues: 2-C-methyl-D-erythritol 2,4-cyclodiphosphate synthase (183 aa).

A divalent metal cation is bound by residues Asp-10 and His-12. Residues 10–12 (DVH) and 38–39 (HS) contribute to the 4-CDP-2-C-methyl-D-erythritol 2-phosphate site. His-46 is an a divalent metal cation binding site. 4-CDP-2-C-methyl-D-erythritol 2-phosphate-binding positions include 60–62 (DIG) and 65–69 (FPDTD).

The protein belongs to the IspF family. As to quaternary structure, homotrimer. It depends on a divalent metal cation as a cofactor.

The enzyme catalyses 4-CDP-2-C-methyl-D-erythritol 2-phosphate = 2-C-methyl-D-erythritol 2,4-cyclic diphosphate + CMP. The protein operates within isoprenoid biosynthesis; isopentenyl diphosphate biosynthesis via DXP pathway; isopentenyl diphosphate from 1-deoxy-D-xylulose 5-phosphate: step 4/6. Involved in the biosynthesis of isopentenyl diphosphate (IPP) and dimethylallyl diphosphate (DMAPP), two major building blocks of isoprenoid compounds. Catalyzes the conversion of 4-diphosphocytidyl-2-C-methyl-D-erythritol 2-phosphate (CDP-ME2P) to 2-C-methyl-D-erythritol 2,4-cyclodiphosphate (ME-CPP) with a corresponding release of cytidine 5-monophosphate (CMP). This Verminephrobacter eiseniae (strain EF01-2) protein is 2-C-methyl-D-erythritol 2,4-cyclodiphosphate synthase.